A 725-amino-acid polypeptide reads, in one-letter code: Methionine--tRNA ligase (725 aa).

The 'HIGH' region motif lies at 27–37 (PYANGQIHIGH). Cys158, Cys161, Cys171, and Cys174 together coordinate Zn(2+). The 'KMSKS' region motif lies at 348 to 352 (KMSKS). An ATP-binding site is contributed by Lys351. One can recognise a tRNA-binding domain in the interval 619-725 (DFAKIDLRIA…SGAKPGMRVK (107 aa)).

The protein belongs to the class-I aminoacyl-tRNA synthetase family. MetG type 1 subfamily. In terms of assembly, homodimer. The cofactor is Zn(2+).

It localises to the cytoplasm. The enzyme catalyses tRNA(Met) + L-methionine + ATP = L-methionyl-tRNA(Met) + AMP + diphosphate. Is required not only for elongation of protein synthesis but also for the initiation of all mRNA translation through initiator tRNA(fMet) aminoacylation. The chain is Methionine--tRNA ligase from Burkholderia pseudomallei (strain 668).